Reading from the N-terminus, the 209-residue chain is CASP-like protein 2A1 (209 aa).

Over 1-38 (MSKMAEEKVLAAPATVDGGMQSSGDLQASSAAAARVRP) the chain is Cytoplasmic. The helical transmembrane segment at 39–59 (VETLLRAAPLGLCVAAMAIML) threads the bilayer. At 60-80 (RNSVTNEYGTVSYSDLGGFKY) the chain is on the extracellular side. A helical membrane pass occupies residues 81–101 (LVYANGLCAAYSLASAFYIAV). Residues 102–109 (PRPATLSR) lie on the Cytoplasmic side of the membrane. Residues 110–130 (SWVVFLLDQVFTYLILAAGAA) traverse the membrane as a helical segment. Over 131 to 163 (SAELLYLAYNGDKEVTWSEACGVFGGFCRQART) the chain is Extracellular. Residues 164 to 184 (SVAITFASVACYILLSLISSY) traverse the membrane as a helical segment. Residues 185–209 (RLFSAYDPPQPSLGNKGVEIAAFPR) are Cytoplasmic-facing.

The protein belongs to the Casparian strip membrane proteins (CASP) family. Homodimer and heterodimers.

It localises to the cell membrane. This chain is CASP-like protein 2A1, found in Oryza sativa subsp. indica (Rice).